The chain runs to 397 residues: uncharacterized protein (397 aa).

Positions 368–391 (TTKPGLHQPTQKRPTQTTSKPYIN) are disordered. Residues 375–388 (QPTQKRPTQTTSKP) show a composition bias toward polar residues.

This is an uncharacterized protein from Acanthamoeba polyphaga mimivirus (APMV).